The primary structure comprises 540 residues: Zona pellucida sperm-binding protein 4 (540 aa).

An N-terminal signal peptide occupies residues 1–24; sequence MAPGSTMWLLGYIFLCFPVSFALI. The Extracellular segment spans residues 25-515; the sequence is KQPKPETPTD…SGVPVHPGAL (491 aa). N-linked (GlcNAc...) asparagine glycans are attached at residues Asn-76 and Asn-97. The P-type domain maps to 145 to 187; the sequence is GLCDSVPVQDRLPCATAPISQEDCEELGCCHSSEEVNACYYGN. The 279-residue stretch at 192-470 folds into the ZP domain; sequence HCTQEGHFSI…VTCPIDSRRR (279 aa). Residues Asn-206 and Asn-223 are each glycosylated (N-linked (GlcNAc...) asparagine). A glycan (O-linked (GalNAc...) serine) is linked at Ser-296. The O-linked (GalNAc...) threonine glycan is linked to Thr-306. Residues Cys-371 and Cys-446 are joined by a disulfide bond. Residues 467–540 constitute a propeptide, removed in mature form; that stretch reads SRRRNSDINF…VSYVAIRTRR (74 aa). N-linked (GlcNAc...) asparagine glycosylation is found at Asn-478 and Asn-482. The chain crosses the membrane as a helical span at residues 516–536; it reads WVAGLSGIFIIGALLVSYVAI. Residues 537–540 are Cytoplasmic-facing; that stretch reads RTRR.

It belongs to the ZP domain family. ZPB subfamily. Post-translationally, proteolytically cleaved before the transmembrane segment to yield the secreted ectodomain incorporated in the zona pellucida. In terms of tissue distribution, expressed in oocytes (at protein level).

The protein resides in the zona pellucida. The protein localises to the cell membrane. Functionally, component of the zona pellucida, an extracellular matrix surrounding oocytes which mediates sperm binding, induction of the acrosome reaction and prevents post-fertilization polyspermy. The zona pellucida is composed of 3 to 4 glycoproteins, ZP1, ZP2, ZP3, and ZP4. ZP4 may act as a sperm receptor. This Oryctolagus cuniculus (Rabbit) protein is Zona pellucida sperm-binding protein 4 (ZP4).